Here is an 894-residue protein sequence, read N- to C-terminus: MIFWSFVAGVVTFYCSLGPDSLLPNIFFTIKYKPKQLGLQELFPQGHSCAVCGKVKCKRHRPSLLLENYQPWLDLKISSKVDASLSEVLELVLENFVYPWYRDVTDDESFVDELRITLRFFASVLIRRIHKVDIPSIITKKLLKAAMKHIEVIVKARQKVKNTEFLQQAALEEYGPELHVALRSRRDELHYLRKLTELLFPYILPPKATDCRSLTLLIREILSGSVFLPSLDFLADPDTVNHLLIIFIDDSPPEKATEPASPLVPFLQKFAEPRNKKPSVLKLELKQIREQQDLLFRFMNFLKQEGAVHVLQFCLTVEEFNDRILRPELSNDEMLSLHEELQKIYKTYCLDESIDKIRFDPFIVEEIQRIAEGPYIDVVKLQTMRCLFEAYEHVLSLLENVFTPMFCHSDEYFRQLLRGAESPTRNSKLNRGSLSLDDFRNTQKRGESFGISRIGSKIKGVFKSTTMEGAMLPNYGVAEGEDDFIEEGIVVMEDDSPVEAVSTPNTPRNLAAWKISIPYVDFFEDPSSERKEKKERIPVFCIDVERNDRRAVGHEPEHWSVYRRYLEFYVLESKLTEFHGTFPDAQLPSKRIIGPKNYEFLKSKREEFQEYLQKLLQHPELSNSQLLADFLSPNGGETQFLDKILPDVNLGKIIKSVPGKLMKEKGQHLEPFIMNFINSCESPKPKPSRPELTILSPTSENNKKLFNDLFKNNANRAENTERKQNQNYFMEVMTVEGVYDYLMYVGRVVFQVPDWLHHLLMGTRILFKNTLEMYTDYYLQCKLEQLFQEHRLVSLITLLRDAIFCENTEPRSLQDKQKGAKQTFEEMMNYIPDLLVKCIGEETKYESIRLLFDGLQQPVLNKQLTYVLLDIVIQELFPELNKVQKEVTSVTSWM.

The PXA domain occupies 78–252 (SSKVDASLSE…LLIIFIDDSP (175 aa)). The 133-residue stretch at 284 to 416 (ELKQIREQQD…CHSDEYFRQL (133 aa)) folds into the RGS domain. Ser-496 is modified (phosphoserine). Positions 518–638 (PYVDFFEDPS…DFLSPNGGET (121 aa)) constitute a PX domain.

The protein belongs to the sorting nexin family.

It is found in the cytoplasm. Its subcellular location is the cell projection. It localises to the dendrite. In terms of biological role, plays a role in maintaining normal neuronal excitability and synaptic transmission. May be involved in several stages of intracellular trafficking. This chain is Sorting nexin-14 (SNX14), found in Pongo abelii (Sumatran orangutan).